Here is a 111-residue protein sequence, read N- to C-terminus: Disintegrin CV-11-alpha (111 aa).

The signal sequence occupies residues 1 to 20 (MIQVLLVIICLAVFPYQGSS). Positions 21–46 (IILESGNVNDFELVYPKKVTVLPTGA) are excised as a propeptide. Residues 47-111 (MNSAHPCCDP…SDCPRNPWKD (65 aa)) form the Disintegrin domain. 4 cysteine pairs are disulfide-bonded: Cys53–Cys76, Cys67–Cys73, Cys72–Cys97, and Cys85–Cys104. The short motif at 89 to 91 (KGD) is the Cell attachment site element.

Belongs to the disintegrin family. Dimeric disintegrin subfamily. In terms of assembly, heterodimer with subunit beta; disulfide-linked. Expressed by the venom gland.

It localises to the secreted. In terms of biological role, inhibits ADP-induced human platelet aggregation. Antagonist of alpha-IIb/beta-3 (ITGA2B/ITGB3). This is Disintegrin CV-11-alpha from Cerastes vipera (Sahara sand viper).